Consider the following 215-residue polypeptide: Large ribosomal subunit protein uL4 (215 aa).

The segment at lysine 51–valine 88 is disordered.

This sequence belongs to the universal ribosomal protein uL4 family. As to quaternary structure, part of the 50S ribosomal subunit.

One of the primary rRNA binding proteins, this protein initially binds near the 5'-end of the 23S rRNA. It is important during the early stages of 50S assembly. It makes multiple contacts with different domains of the 23S rRNA in the assembled 50S subunit and ribosome. Its function is as follows. Forms part of the polypeptide exit tunnel. In Granulibacter bethesdensis (strain ATCC BAA-1260 / CGDNIH1), this protein is Large ribosomal subunit protein uL4.